We begin with the raw amino-acid sequence, 331 residues long: Trans-O-hydroxybenzylidenepyruvate hydratase-aldolase (331 aa).

It belongs to the DapA family.

It carries out the reaction (3E)-4-(2-hydroxyphenyl)-2-oxobut-3-enoate + H2O = salicylaldehyde + pyruvate. The protein operates within aromatic compound metabolism; naphthalene degradation. Involved in the naphthalene upper catabolic pathway. Catalyzes the transformation of trans-O-hydroxybenzylidenepyruvate (THBPA) to salicylaldehyde and pyruvate. The reaction is reversible. Can also use substrate which carry trans-alpha,beta-unsaturated keto acid side chain and adjacent hydroxyl group such as trans-4-(3-hydroxy-2-thianaphthenyl)-2-oxo-but-3-enoate, trans-4-(3-hydroxy-2-benzofuranyl)-2-oxobut-3-enoate, and trans-4-(3-hydroxy-2-thienyl)-2-oxobut-3-enoate. The chain is Trans-O-hydroxybenzylidenepyruvate hydratase-aldolase (nahE) from Pseudomonas putida (Arthrobacter siderocapsulatus).